The following is a 635-amino-acid chain: Signal recognition particle subunit SRP72 (635 aa).

TPR repeat units follow at residues 7–42 (GGLYQCLTDISRADTSGDYQKALTSANKLIRKYPKE), 75–105 (GHVGFEKAYIHYRQDELDEAIKELNTCDKDD), 106–139 (VKALELKAQVFYKQENYQQAYDIYLYLLKNHSDD), 171–204 (YSQLYNRACVEIEAEKLPQALESLEKALKTCRKS), 220–253 (DSIRVQKAYVLQRMGQKAEALAIYEKVQAANHPD), 255–290 (SVKATITNNIPAASSDFALPESRKRFKAALQIDQTK), and 436–469 (VEVEQQRGNETAATKHLEKLVEKFPEDLQLQCRL). The disordered stretch occupies residues 539–635 (KRKRKIRLPK…QKKKKNASKF (97 aa)). The segment covering 557–569 (DPERWLPRQERST) has biased composition (basic and acidic residues). Basic residues predominate over residues 625–635 (KQKKKKNASKF).

This sequence belongs to the SRP72 family. Heterodimer with srpa-68. Srpa-68-srpa-72 heterodimer formation is stabilized by the presence of 7SL RNA. Component of a signal recognition particle (SRP) complex that consists of a 7SL RNA molecule of 300 nucleotides and six protein subunits: srpa-72, srpa-68, SRP54, F37F2.2/SRP19, F25G6.8/SRP14 and ZK512.4/SRP9. Within the SRP complex, interacts (via N-terminus) with srpa-68 (via C-terminus).

It is found in the cytoplasm. The protein resides in the endoplasmic reticulum. Functionally, component of the signal recognition particle (SRP) complex, a ribonucleoprotein complex that mediates the cotranslational targeting of secretory and membrane proteins to the endoplasmic reticulum (ER). The SRP complex interacts with the signal sequence in nascent secretory and membrane proteins and directs them to the membrane of the ER. The SRP complex targets the ribosome-nascent chain complex to the SRP receptor (SR), which is anchored in the ER, where SR compaction and GTPase rearrangement drive cotranslational protein translocation into the ER. Binds the signal recognition particle RNA (7SL RNA) in presence of srpa-68. Can bind 7SL RNA with low affinity. The SRP complex possibly participates in the elongation arrest function. This is Signal recognition particle subunit SRP72 from Caenorhabditis elegans.